A 621-amino-acid polypeptide reads, in one-letter code: Inositol-pentakisphosphate 2-kinase (621 aa).

Disordered regions lie at residues 1–20, 87–111, and 201–226; these read MTAERGPRSPGTGQKLRLRA, RHELADEVARPEGQRVSSERAGTEN, and TGDESGAAAGVGDGGGVGRGAGTRTK. Residues 87–108 are compositionally biased toward basic and acidic residues; the sequence is RHELADEVARPEGQRVSSERAG. The segment covering 209–221 has biased composition (gly residues); sequence AGVGDGGGVGRGA. The short motif at 241-245 is the EXKPK motif element; the sequence is EIKPK. Disordered stretches follow at residues 391 to 416 and 514 to 565; these read SKRAEGSNQSQKQQQEQPEPEQLNQS and TAMA…QNNK. Composition is skewed to low complexity over residues 397–416 and 529–539; these read SNQSQKQQQEQPEPEQLNQS and ETPAEAASTTS. Residues 540–565 show a composition bias toward polar residues; it reads RNVNQNESQKLNRNEPANQTQAQNNK.

Belongs to the IPK1 type 2 family.

The catalysed reaction is 1D-myo-inositol 1,3,4,5,6-pentakisphosphate + ATP = 1D-myo-inositol hexakisphosphate + ADP + H(+). Its function is as follows. Contributes to the formation of Ins(1,2,3,4,5,6)P6 (InsP6, IP6 or phytate). Phosphorylates Ins(1,3,4,5,6)P5 at position 2 to form InsP6. Together with Ipk2, they are the main contributors to higher InsP synthesis. The polypeptide is Inositol-pentakisphosphate 2-kinase (Ipk1) (Drosophila melanogaster (Fruit fly)).